Reading from the N-terminus, the 180-residue chain is NAD(P)H-quinone oxidoreductase subunit I, chloroplastic (180 aa).

4Fe-4S ferredoxin-type domains follow at residues 55 to 84 (GRIHFEFDKCIACEVCVRVCPIDLPVVHWR) and 95 to 124 (LNYSIDFGICIFCGNCVEYCPTNCLSMTEE). Cys-64, Cys-67, Cys-70, Cys-74, Cys-104, Cys-107, Cys-110, and Cys-114 together coordinate [4Fe-4S] cluster.

Belongs to the complex I 23 kDa subunit family. NDH is composed of at least 16 different subunits, 5 of which are encoded in the nucleus. Requires [4Fe-4S] cluster as cofactor.

The protein resides in the plastid. It localises to the chloroplast thylakoid membrane. The catalysed reaction is a plastoquinone + NADH + (n+1) H(+)(in) = a plastoquinol + NAD(+) + n H(+)(out). It carries out the reaction a plastoquinone + NADPH + (n+1) H(+)(in) = a plastoquinol + NADP(+) + n H(+)(out). Functionally, NDH shuttles electrons from NAD(P)H:plastoquinone, via FMN and iron-sulfur (Fe-S) centers, to quinones in the photosynthetic chain and possibly in a chloroplast respiratory chain. The immediate electron acceptor for the enzyme in this species is believed to be plastoquinone. Couples the redox reaction to proton translocation, and thus conserves the redox energy in a proton gradient. The sequence is that of NAD(P)H-quinone oxidoreductase subunit I, chloroplastic from Calycanthus floridus var. glaucus (Eastern sweetshrub).